We begin with the raw amino-acid sequence, 356 residues long: tRNA-specific 2-thiouridylase MnmA (356 aa).

ATP contacts are provided by residues 8–15 (GMSGGVDS) and methionine 34. The active-site Nucleophile is the cysteine 103. An intrachain disulfide couples cysteine 103 to cysteine 199. ATP is bound at residue glycine 127. An interaction with tRNA region spans residues 149 to 151 (KDQ). Cysteine 199 (cysteine persulfide intermediate) is an active-site residue. The interaction with tRNA stretch occupies residues 305–306 (RY).

This sequence belongs to the MnmA/TRMU family.

The protein resides in the cytoplasm. It catalyses the reaction S-sulfanyl-L-cysteinyl-[protein] + uridine(34) in tRNA + AH2 + ATP = 2-thiouridine(34) in tRNA + L-cysteinyl-[protein] + A + AMP + diphosphate + H(+). Functionally, catalyzes the 2-thiolation of uridine at the wobble position (U34) of tRNA, leading to the formation of s(2)U34. This is tRNA-specific 2-thiouridylase MnmA from Clostridium kluyveri (strain ATCC 8527 / DSM 555 / NBRC 12016 / NCIMB 10680 / K1).